Reading from the N-terminus, the 447-residue chain is MIKIYDTMSRDLREFVPIEDGKIKMYVCGPTVYNYIHVGNARSTVAFDTIRRYFEYRGYKVAYISNFTDVDDKIINRAREEGITPQEVADKYIAAFREDVTALGVKPATRHPRVVEFMADIIRFVEDLIEKGFAYESQGDVYFRVEKSHNYAKLANKTLEDLELGASGRTDEETARKENPVDFALWKSSKPGEISWDSPWGPGRPGWHIECSVMSTEILGDTIDIHGGGADLEFPHHTNEIAQSEAKTGKAFANYWMHNGFVNIDNVKMSKSLGNFITVHDALKTLDGQVLRFFFATQHYRKPINFTEKAVRDAETNLKYLKNTYEQPFTGNVDAQELQNFKDKFVAAMDEDFNAANGITVVFEMAKWINSGNYDASVKQALADMLEIFGIVFVEEVLDAEIEDLIQKRQEARANRDFATADQIRDQLVTQGIKLLDTKDGVRWTRD.

Residue Cys28 participates in Zn(2+) binding. A 'HIGH' region motif is present at residues Pro30 to Asn40. Cys211, His236, and Glu240 together coordinate Zn(2+). The short motif at Lys268–Ser272 is the 'KMSKS' region element. Lys271 provides a ligand contact to ATP.

Belongs to the class-I aminoacyl-tRNA synthetase family. In terms of assembly, monomer. It depends on Zn(2+) as a cofactor.

The protein localises to the cytoplasm. It carries out the reaction tRNA(Cys) + L-cysteine + ATP = L-cysteinyl-tRNA(Cys) + AMP + diphosphate. This Streptococcus pneumoniae serotype 4 (strain ATCC BAA-334 / TIGR4) protein is Cysteine--tRNA ligase.